The following is a 503-amino-acid chain: Cobyric acid synthase (503 aa).

The 200-residue stretch at 251–450 (DLDIAVIRLP…IHGIFENAAF (200 aa)) folds into the GATase cobBQ-type domain. Cys-331 acts as the Nucleophile in catalysis. His-442 is an active-site residue.

It belongs to the CobB/CobQ family. CobQ subfamily.

Its pathway is cofactor biosynthesis; adenosylcobalamin biosynthesis. In terms of biological role, catalyzes amidations at positions B, D, E, and G on adenosylcobyrinic A,C-diamide. NH(2) groups are provided by glutamine, and one molecule of ATP is hydrogenolyzed for each amidation. The chain is Cobyric acid synthase from Dehalococcoides mccartyi (strain CBDB1).